The sequence spans 304 residues: Homoserine O-acetyltransferase (304 aa).

Catalysis depends on cysteine 142, which acts as the Acyl-thioester intermediate. The substrate site is built by lysine 163 and serine 191. Histidine 234 acts as the Proton acceptor in catalysis. The active site involves glutamate 236. Position 248 (arginine 248) interacts with substrate.

Belongs to the MetA family.

It is found in the cytoplasm. The catalysed reaction is L-homoserine + acetyl-CoA = O-acetyl-L-homoserine + CoA. It functions in the pathway amino-acid biosynthesis; L-methionine biosynthesis via de novo pathway; O-acetyl-L-homoserine from L-homoserine: step 1/1. Functionally, transfers an acetyl group from acetyl-CoA to L-homoserine, forming acetyl-L-homoserine. In Thermotoga neapolitana (strain ATCC 49049 / DSM 4359 / NBRC 107923 / NS-E), this protein is Homoserine O-acetyltransferase.